The following is a 375-amino-acid chain: Chaperone protein DnaJ (375 aa).

Positions 5-70 (DFYETLGVAK…QKRAAYDRYG (66 aa)) constitute a J domain. The CR-type zinc finger occupies 136–214 (GKTAQIRVPT…CHGQGRVTEE (79 aa)). Cys-149, Cys-152, Cys-166, Cys-169, Cys-188, Cys-191, Cys-202, and Cys-205 together coordinate Zn(2+). CXXCXGXG motif repeat units lie at residues 149 to 156 (CDVCSGSG), 166 to 173 (CGTCQGSG), 188 to 195 (CPTCHGRG), and 202 to 209 (CPKCHGQG).

This sequence belongs to the DnaJ family. As to quaternary structure, homodimer. Requires Zn(2+) as cofactor.

Its subcellular location is the cytoplasm. In terms of biological role, participates actively in the response to hyperosmotic and heat shock by preventing the aggregation of stress-denatured proteins and by disaggregating proteins, also in an autonomous, DnaK-independent fashion. Unfolded proteins bind initially to DnaJ; upon interaction with the DnaJ-bound protein, DnaK hydrolyzes its bound ATP, resulting in the formation of a stable complex. GrpE releases ADP from DnaK; ATP binding to DnaK triggers the release of the substrate protein, thus completing the reaction cycle. Several rounds of ATP-dependent interactions between DnaJ, DnaK and GrpE are required for fully efficient folding. Also involved, together with DnaK and GrpE, in the DNA replication of plasmids through activation of initiation proteins. This Rhizobium etli (strain CIAT 652) protein is Chaperone protein DnaJ.